A 525-amino-acid polypeptide reads, in one-letter code: MTQNIHQDRILILDFGSQYTQLLARRVREIGVYCELWAWDVSEAQIRDFNPSGIILSGGPESTTEAGSPRAPEYVFQAGVPVLGVCYGMQTMAMQLGGRVESSTEREFGYAKVEVTAPGRLFDGIQDALSADGNAVLDVWMSHGDKVTAIPSDFTTVASTETCPYAIMANEAKRFYGVQFHPEVTHTHQGQHMLQRFVLEICGCAALWTPATIIEDAVVRMREQIGDDEVILGLSGGVDSSVTALLLHRAIGKRLTCVFVDNGLLRLNEAEQVMDMFGDRFGLNIIHVNAEARFLSALSGIADPEAKRKTIGRVFVEVFDEEAAKLPQVKWLAQGTIYPDVIESAASATGKAHVIKSHHNVGGLPEEMKLGLVEPLKELFKDEVRKIGLELGLPYDMLYRHPFPGPGLGVRVLGEVKKEYCDLLRRADAIFIEELHKADLYNKVSQAFTVFLPVRSVGVMGDGRKYDWVVSLRAVETIDFMTAHWAHLPYDFLGRVSNRIINEVNGISRVVYDISGKPPATIEWE.

Positions 9–207 (RILILDFGSQ…VLEICGCAAL (199 aa)) constitute a Glutamine amidotransferase type-1 domain. The active-site Nucleophile is cysteine 86. Residues histidine 181 and glutamate 183 contribute to the active site. One can recognise a GMPS ATP-PPase domain in the interval 208–400 (WTPATIIEDA…LGLPYDMLYR (193 aa)). An ATP-binding site is contributed by 235–241 (SGGVDSS).

Homodimer.

The enzyme catalyses XMP + L-glutamine + ATP + H2O = GMP + L-glutamate + AMP + diphosphate + 2 H(+). Its pathway is purine metabolism; GMP biosynthesis; GMP from XMP (L-Gln route): step 1/1. Its function is as follows. Catalyzes the synthesis of GMP from XMP. In Edwardsiella ictaluri (strain 93-146), this protein is GMP synthase [glutamine-hydrolyzing].